A 205-amino-acid polypeptide reads, in one-letter code: Ribosomal RNA large subunit methyltransferase E (205 aa).

Residues Gly50, Trp52, Asp67, Asn83, and Asp111 each coordinate S-adenosyl-L-methionine. Lys151 functions as the Proton acceptor in the catalytic mechanism.

The protein belongs to the class I-like SAM-binding methyltransferase superfamily. RNA methyltransferase RlmE family.

It localises to the cytoplasm. It catalyses the reaction uridine(2552) in 23S rRNA + S-adenosyl-L-methionine = 2'-O-methyluridine(2552) in 23S rRNA + S-adenosyl-L-homocysteine + H(+). In terms of biological role, specifically methylates the uridine in position 2552 of 23S rRNA at the 2'-O position of the ribose in the fully assembled 50S ribosomal subunit. This Thermoplasma acidophilum (strain ATCC 25905 / DSM 1728 / JCM 9062 / NBRC 15155 / AMRC-C165) protein is Ribosomal RNA large subunit methyltransferase E.